An 811-amino-acid polypeptide reads, in one-letter code: Glycerol-3-phosphate acyltransferase (811 aa).

The HXXXXD motif signature appears at C308–M313.

Belongs to the GPAT/DAPAT family.

The protein resides in the cell inner membrane. It catalyses the reaction sn-glycerol 3-phosphate + an acyl-CoA = a 1-acyl-sn-glycero-3-phosphate + CoA. It participates in phospholipid metabolism; CDP-diacylglycerol biosynthesis; CDP-diacylglycerol from sn-glycerol 3-phosphate: step 1/3. The sequence is that of Glycerol-3-phosphate acyltransferase from Pseudoalteromonas atlantica (strain T6c / ATCC BAA-1087).